We begin with the raw amino-acid sequence, 450 residues long: F-box/FBD/LRR-repeat protein At5g22660 (450 aa).

Residues 12 to 58 (EDRISSLPDHLLSQILSNLPTENAVTTSILSTRWKDLWLSTPVLDID) form the F-box domain. 2 LRR repeats span residues 157–181 (LPNL…KFIS) and 294–317 (LSSL…LKHE). The region spanning 364 to 416 (EEISLSSSVPKCLQSSLENVEIIRPNYGSGEEMKLSKYFLENSLVLKKFKLCR) is the FBD domain.

This chain is F-box/FBD/LRR-repeat protein At5g22660, found in Arabidopsis thaliana (Mouse-ear cress).